The primary structure comprises 285 residues: Nucleotide-binding protein Avin_12760 (285 aa).

Position 8–15 (8–15 (GRSGSGKS)) interacts with ATP. 60-63 (DARN) contacts GTP.

It belongs to the RapZ-like family.

Displays ATPase and GTPase activities. This chain is Nucleotide-binding protein Avin_12760, found in Azotobacter vinelandii (strain DJ / ATCC BAA-1303).